Reading from the N-terminus, the 394-residue chain is F-box protein At2g17830 (394 aa).

Residues 1 to 47 (MAIMSDLPRDLLAEILSRVPLASLRSVRFTCKKWNDLSKDRSFLKKQ) form the F-box domain.

This is F-box protein At2g17830 from Arabidopsis thaliana (Mouse-ear cress).